Consider the following 473-residue polypeptide: Fumarate hydratase class II (473 aa).

Residues 105–107, 130–133, 140–142, and Thr188 each bind substrate; these read SGT, HPND, and SSN. Catalysis depends on His189, which acts as the Proton donor/acceptor. Ser319 is an active-site residue. Substrate is bound by residues Ser320 and 325 to 327; that span reads KVN.

Belongs to the class-II fumarase/aspartase family. Fumarase subfamily. In terms of assembly, homotetramer.

Its subcellular location is the cytoplasm. The catalysed reaction is (S)-malate = fumarate + H2O. It participates in carbohydrate metabolism; tricarboxylic acid cycle; (S)-malate from fumarate: step 1/1. Its function is as follows. Involved in the TCA cycle. Catalyzes the stereospecific interconversion of fumarate to L-malate. The sequence is that of Fumarate hydratase class II from Xylella fastidiosa (strain 9a5c).